A 361-amino-acid polypeptide reads, in one-letter code: Very-long-chain 3-oxoacyl-CoA reductase (361 aa).

The helical transmembrane segment at 32 to 52 (PALILSTVGAAFLLRYTLSIF) threads the bilayer. 8 residues coordinate NADP(+): Val-79, Asp-133, Asn-163, Arg-198, Tyr-236, Lys-240, Val-269, and Ser-271. Residue Tyr-236 is the Proton donor of the active site. Lys-240 serves as the catalytic Lowers pKa of active site Tyr.

The protein belongs to the short-chain dehydrogenases/reductases (SDR) family.

It localises to the endoplasmic reticulum membrane. The enzyme catalyses a very-long-chain (3R)-3-hydroxyacyl-CoA + NADP(+) = a very-long-chain 3-oxoacyl-CoA + NADPH + H(+). It participates in lipid metabolism; fatty acid biosynthesis. Component of the microsomal membrane bound fatty acid elongation system, which produces the 26-carbon very long-chain fatty acids (VLCFA) from palmitate. Catalyzes the reduction of the 3-ketoacyl-CoA intermediate that is formed in each cycle of fatty acid elongation. VLCFAs serve as precursors for ceramide and sphingolipids. The chain is Very-long-chain 3-oxoacyl-CoA reductase from Cryptococcus neoformans var. neoformans serotype D (strain B-3501A) (Filobasidiella neoformans).